The sequence spans 194 residues: Inosine triphosphate pyrophosphatase (194 aa).

11-16 (TGNAKK) serves as a coordination point for ITP. Glu39 provides a ligand contact to Mg(2+). ITP contacts are provided by residues Lys51, 67-68 (DT), Lys84, 143-146 (FGWD), Lys166, and 171-172 (HR).

This sequence belongs to the HAM1 NTPase family. Homodimer. Mg(2+) serves as cofactor. Mn(2+) is required as a cofactor.

The protein localises to the cytoplasm. The catalysed reaction is ITP + H2O = IMP + diphosphate + H(+). It catalyses the reaction dITP + H2O = dIMP + diphosphate + H(+). The enzyme catalyses XTP + H2O = XMP + diphosphate + H(+). In terms of biological role, pyrophosphatase that hydrolyzes non-canonical purine nucleotides such as inosine triphosphate (ITP), deoxyinosine triphosphate (dITP) or xanthosine 5'-triphosphate (XTP) to their respective monophosphate derivatives. The enzyme does not distinguish between the deoxy- and ribose forms. Probably excludes non-canonical purines from RNA and DNA precursor pools, thus preventing their incorporation into RNA and DNA and avoiding chromosomal lesions. The protein is Inosine triphosphate pyrophosphatase (itpa) of Dictyostelium discoideum (Social amoeba).